The sequence spans 198 residues: MSEIATMAQGEAGAIGPGRLVLVVGPSGAGKDTLLQLAQAACIDDHDVVFPRRVVTRESSAAEDNIAMSPDEFRRGIDHGDFAVHWDAHGHSYALPLEINDDIRAGRAVVVNVSRTVIAALRQAYANVVVVAITAPPDVLAQRLAARARHSDGNIAERLSRSVEDASAQADVTILNAGSADYHSRQLVRVIRNESWRE.

ATP is bound at residue 25-32 (GPSGAGKD).

This sequence belongs to the ribose 1,5-bisphosphokinase family.

The catalysed reaction is alpha-D-ribose 1,5-bisphosphate + ATP = 5-phospho-alpha-D-ribose 1-diphosphate + ADP. It participates in metabolic intermediate biosynthesis; 5-phospho-alpha-D-ribose 1-diphosphate biosynthesis; 5-phospho-alpha-D-ribose 1-diphosphate from D-ribose 5-phosphate (route II): step 3/3. Catalyzes the phosphorylation of ribose 1,5-bisphosphate to 5-phospho-D-ribosyl alpha-1-diphosphate (PRPP). The sequence is that of Ribose 1,5-bisphosphate phosphokinase PhnN from Bradyrhizobium diazoefficiens (strain JCM 10833 / BCRC 13528 / IAM 13628 / NBRC 14792 / USDA 110).